The sequence spans 506 residues: Histidine ammonia-lyase (506 aa).

Positions 142-144 (ASG) form a cross-link, 5-imidazolinone (Ala-Gly). 2,3-didehydroalanine (Ser) is present on serine 143.

Belongs to the PAL/histidase family. Contains an active site 4-methylidene-imidazol-5-one (MIO), which is formed autocatalytically by cyclization and dehydration of residues Ala-Ser-Gly.

Its subcellular location is the cytoplasm. The catalysed reaction is L-histidine = trans-urocanate + NH4(+). It participates in amino-acid degradation; L-histidine degradation into L-glutamate; N-formimidoyl-L-glutamate from L-histidine: step 1/3. The protein is Histidine ammonia-lyase of Bacillus cereus (strain ATCC 14579 / DSM 31 / CCUG 7414 / JCM 2152 / NBRC 15305 / NCIMB 9373 / NCTC 2599 / NRRL B-3711).